We begin with the raw amino-acid sequence, 342 residues long: Ketol-acid reductoisomerase (NADP(+)) (342 aa).

Positions 2–182 (AEMFYDDDAD…GGLRAGGIKT (181 aa)) constitute a KARI N-terminal Rossmann domain. Residues 25–28 (FGSQ), lysine 48, serine 51, serine 53, and 83–86 (DHLQ) each bind NADP(+). The active site involves histidine 108. Glycine 134 is an NADP(+) binding site. The KARI C-terminal knotted domain maps to 183–328 (TFTEETETDL…RELRKLMAWV (146 aa)). Aspartate 191, glutamate 195, glutamate 227, and glutamate 231 together coordinate Mg(2+). Serine 252 provides a ligand contact to substrate.

The protein belongs to the ketol-acid reductoisomerase family. Mg(2+) is required as a cofactor.

The enzyme catalyses (2R)-2,3-dihydroxy-3-methylbutanoate + NADP(+) = (2S)-2-acetolactate + NADPH + H(+). The catalysed reaction is (2R,3R)-2,3-dihydroxy-3-methylpentanoate + NADP(+) = (S)-2-ethyl-2-hydroxy-3-oxobutanoate + NADPH + H(+). It functions in the pathway amino-acid biosynthesis; L-isoleucine biosynthesis; L-isoleucine from 2-oxobutanoate: step 2/4. It participates in amino-acid biosynthesis; L-valine biosynthesis; L-valine from pyruvate: step 2/4. Its function is as follows. Involved in the biosynthesis of branched-chain amino acids (BCAA). Catalyzes an alkyl-migration followed by a ketol-acid reduction of (S)-2-acetolactate (S2AL) to yield (R)-2,3-dihydroxy-isovalerate. In the isomerase reaction, S2AL is rearranged via a Mg-dependent methyl migration to produce 3-hydroxy-3-methyl-2-ketobutyrate (HMKB). In the reductase reaction, this 2-ketoacid undergoes a metal-dependent reduction by NADPH to yield (R)-2,3-dihydroxy-isovalerate. This Kineococcus radiotolerans (strain ATCC BAA-149 / DSM 14245 / SRS30216) protein is Ketol-acid reductoisomerase (NADP(+)).